A 157-amino-acid chain; its full sequence is Sorting nexin-3 (157 aa).

The tract at residues 1 to 21 (MSKPFQPISDVINTSPKNKSQ) is disordered. Over residues 11 to 21 (VINTSPKNKSQ) the composition is skewed to polar residues. Positions 32–152 (NFLEIEVKNP…EFIQNEKWDP (121 aa)) constitute a PX domain. A 1,2-diacyl-sn-glycero-3-phospho-(1D-myo-inositol-3-phosphate)-binding residues include Arg75, Ser77, Lys101, and Arg117.

This sequence belongs to the sorting nexin family.

The protein resides in the cytoplasm. It is found in the golgi apparatus membrane. Its subcellular location is the prevacuolar compartment membrane. Required for retention of late Golgi membrane proteins. Component of the retrieval machinery that functions by direct interaction with the cytosolic tails of certain TGN membrane proteins during the sorting/budding process at the prevacuolar compartment. Binds phosphatidylinositol 3-phosphate (PtdIns(P3)). The protein is Sorting nexin-3 (SNX3) of Candida albicans (strain SC5314 / ATCC MYA-2876) (Yeast).